Reading from the N-terminus, the 358-residue chain is Peptide chain release factor 1 (358 aa).

Glutamine 233 carries the N5-methylglutamine modification.

It belongs to the prokaryotic/mitochondrial release factor family. Methylated by PrmC. Methylation increases the termination efficiency of RF1.

It localises to the cytoplasm. In terms of biological role, peptide chain release factor 1 directs the termination of translation in response to the peptide chain termination codons UAG and UAA. This chain is Peptide chain release factor 1, found in Brevibacillus brevis (strain 47 / JCM 6285 / NBRC 100599).